The primary structure comprises 108 residues: FK506-binding protein 1 (108 aa).

Residues 20 to 108 form the PPIase FKBP-type domain; the sequence is GDSVTIHYVG…KFEVELLKIN (89 aa).

The protein belongs to the FKBP-type PPIase family. FKBP1 subfamily.

It is found in the cytoplasm. The enzyme catalyses [protein]-peptidylproline (omega=180) = [protein]-peptidylproline (omega=0). Inhibited by both FK506 and rapamycin. PPIases accelerate the folding of proteins. It catalyzes the cis-trans isomerization of proline imidic peptide bonds in oligopeptides. The chain is FK506-binding protein 1 (FPR1) from Cryptococcus neoformans var. neoformans serotype D (strain JEC21 / ATCC MYA-565) (Filobasidiella neoformans).